The following is a 126-amino-acid chain: MSKKFLTILAGLLLVVSSFFLSVSPAAAANATVKMGSDSGALVFEPSTVTIKAGEEVKWVNNKLSPHNIVFAADGVDADTAAKLSHKGLAFAAGESFTSTFTEPGTYTYYCEPHRGAGMVGKVVVE.

Positions 1–28 are cleaved as a signal peptide; it reads MSKKFLTILAGLLLVVSSFFLSVSPAAA. The Plastocyanin-like domain occupies 29–126; it reads ANATVKMGSD…AGMVGKVVVE (98 aa). The Cu cation site is built by His67, Cys111, His114, and Met119.

This sequence belongs to the plastocyanin family. Requires Cu(2+) as cofactor.

It localises to the cellular thylakoid membrane. Participates in electron transfer between P700 and the cytochrome b6-f complex in photosystem I. The chain is Plastocyanin (petE) from Synechocystis sp. (strain ATCC 27184 / PCC 6803 / Kazusa).